Here is a 289-residue protein sequence, read N- to C-terminus: Deleted in azoospermia-like (289 aa).

The disordered stretch occupies residues 1 to 20 (MSANAEAQCGSISEDNTHSS). In terms of domain architecture, RRM spans 36–117 (NTVFVGGIDI…PAIRKQQNLC (82 aa)). One can recognise a DAZ domain in the interval 162-187 (TYAYSSPAVLIQQQVPVGYQPAYNYQ).

It belongs to the RRM DAZ family.

The protein resides in the cytoplasm. Its function is as follows. RNA-binding protein, which probably plays a central role in gametogenesis in both males and females. Acts by binding to the 3'-UTR of mRNA, specifically recognizing GUU triplets, and promoting the translation of key transcripts. In Gallus gallus (Chicken), this protein is Deleted in azoospermia-like (DAZL).